The sequence spans 914 residues: Polyribonucleotide nucleotidyltransferase (914 aa).

The disordered stretch occupies residues 407 to 427 (YMHNYEMPPYSTGETGRVGSP). Mg(2+) is bound by residues aspartate 521 and aspartate 527. Residues 587–646 (PRIITTSVPVEKIGEVIGPKGKMINQIQEDTGAEIAIEDDGTVFISSEGGEAAKKAKSII) enclose the KH domain. In terms of domain architecture, S1 motif spans 658-730 (GETYNGKVVK…DRGKISLAIP (73 aa)). Residues 727-914 (LAIPGFEDQE…VRRDFDPFED (188 aa)) form a disordered region. 3 stretches are compositionally biased toward basic and acidic residues: residues 742 to 789 (SRGD…RRSD), 797 to 865 (DRPR…DRRG), and 873 to 899 (RGSD…ERTE).

Belongs to the polyribonucleotide nucleotidyltransferase family. It depends on Mg(2+) as a cofactor.

The protein resides in the cytoplasm. It catalyses the reaction RNA(n+1) + phosphate = RNA(n) + a ribonucleoside 5'-diphosphate. Functionally, involved in mRNA degradation. Catalyzes the phosphorolysis of single-stranded polyribonucleotides processively in the 3'- to 5'-direction. In Bifidobacterium longum subsp. infantis (strain ATCC 15697 / DSM 20088 / JCM 1222 / NCTC 11817 / S12), this protein is Polyribonucleotide nucleotidyltransferase.